The sequence spans 318 residues: MTQLASAVWLPTLLLLLLLFWLPGCVPLHGPSTMSGSVGESLSVSCRYEEKFKTKDKYWCRVSLKILCKDIVKTSSSEEARSGRVTIRDHPDNLTFTVTYESLTLEDADTYMCAVDISLFDGSLGFDKYFKIELSVVPSEDPVSSPGPTLETPVVSTSLPTKGPALGSNTEGHREHDYSQGLRLPALLSVLALLLFLLVGTSLLAWRMFQKRLVKADRHPELSQNLRQASEQNECQYVNLQLHTWSLREEPVLPSQVEVVEYSTLALPQEELHYSSVAFNSQRQDSHANGDSLHQPQDQKAEYSEIQKPRKGLSDLYL.

A signal peptide spans 1–27 (MTQLASAVWLPTLLLLLLLFWLPGCVP). The region spanning 28–129 (LHGPSTMSGS…FDGSLGFDKY (102 aa)) is the Ig-like V-type domain. The Extracellular segment spans residues 28-185 (LHGPSTMSGS…HDYSQGLRLP (158 aa)). Residues Cys-46 and Cys-113 are joined by a disulfide bond. Asn-93 is a glycosylation site (N-linked (GlcNAc...) asparagine). Over residues 139–148 (SEDPVSSPGP) the composition is skewed to low complexity. Residues 139 to 174 (SEDPVSSPGPTLETPVVSTSLPTKGPALGSNTEGHR) are disordered. Residues 186 to 206 (ALLSVLALLLFLLVGTSLLAW) traverse the membrane as a helical segment. Residues 207–318 (RMFQKRLVKA…PRKGLSDLYL (112 aa)) lie on the Cytoplasmic side of the membrane. A compositionally biased stretch (polar residues) spans 284-296 (QDSHANGDSLHQP). A disordered region spans residues 284–318 (QDSHANGDSLHQPQDQKAEYSEIQKPRKGLSDLYL). The span at 297 to 308 (QDQKAEYSEIQK) shows a compositional bias: basic and acidic residues. Tyr-303 carries the post-translational modification Phosphotyrosine.

It belongs to the CD300 family. As to quaternary structure, upon tyrosine-phosphorylation, interacts with PTN6/SHP-1 and PTPN11/SHP-2 and INPP5D. Post-translationally, phosphorylated on tyrosine. In terms of processing, N-glycosylated. As to expression, present on the surface of the majority of myeloid cells and a subset of B-cells. Present on the surface of NK cells after IL-12 stimulation.

The protein resides in the cell membrane. Inhibitory receptor which may contribute to the down-regulation of cytolytic activity in natural killer (NK) cells, and to the down-regulation of mast cell degranulation. Negatively regulates the Toll-like receptor (TLR) signaling mediated by MYD88 but not TRIF through activation of PTPN6. In Mus musculus (Mouse), this protein is CMRF35-like molecule 8 (Cd300a).